Reading from the N-terminus, the 157-residue chain is MAAGPQSSGAAVSAAAYPDSPVELPARLQKGAMRRRFWGVFNCLCAGAFGALAAAAAKLAFGSQVNIGLCVLGIVAMASANSLMWTFFSRGLSFSMSSAIASVTVTFSNILCSAILGYLLYGECQEILWWGGVFLILCGLTLIHRKFPPTWKESKEQ.

A run of 4 helical transmembrane segments spans residues F37–A57, I67–F87, I100–L120, and C124–H144.

Its subcellular location is the membrane. This is Transmembrane protein 42 (Tmem42) from Mus musculus (Mouse).